We begin with the raw amino-acid sequence, 213 residues long: Thymidylate kinase (213 aa).

An ATP-binding site is contributed by 11–18 (GPDGAGKT).

This sequence belongs to the thymidylate kinase family.

The catalysed reaction is dTMP + ATP = dTDP + ADP. Phosphorylation of dTMP to form dTDP in both de novo and salvage pathways of dTTP synthesis. The chain is Thymidylate kinase from Oenococcus oeni (strain ATCC BAA-331 / PSU-1).